A 452-amino-acid polypeptide reads, in one-letter code: Chaperone SurA (452 aa).

A signal peptide spans 1–28; that stretch reads MKKTLRFAAVVSSLAASAALLVAAPAAA. 2 consecutive PpiC domains span residues 186–288 and 302–400; these read QQDL…RLVD and IVQT…QVLN.

It localises to the periplasm. It catalyses the reaction [protein]-peptidylproline (omega=180) = [protein]-peptidylproline (omega=0). Chaperone involved in the correct folding and assembly of outer membrane proteins. Recognizes specific patterns of aromatic residues and the orientation of their side chains, which are found more frequently in integral outer membrane proteins. May act in both early periplasmic and late outer membrane-associated steps of protein maturation. This is Chaperone SurA from Burkholderia orbicola (strain AU 1054).